Consider the following 305-residue polypeptide: Sulfate adenylyltransferase subunit 2 (305 aa).

This sequence belongs to the PAPS reductase family. CysD subfamily. In terms of assembly, heterodimer composed of CysD, the smaller subunit, and CysN.

It carries out the reaction sulfate + ATP + H(+) = adenosine 5'-phosphosulfate + diphosphate. The protein operates within sulfur metabolism; hydrogen sulfide biosynthesis; sulfite from sulfate: step 1/3. In terms of biological role, with CysN forms the ATP sulfurylase (ATPS) that catalyzes the adenylation of sulfate producing adenosine 5'-phosphosulfate (APS) and diphosphate, the first enzymatic step in sulfur assimilation pathway. APS synthesis involves the formation of a high-energy phosphoric-sulfuric acid anhydride bond driven by GTP hydrolysis by CysN coupled to ATP hydrolysis by CysD. This chain is Sulfate adenylyltransferase subunit 2, found in Stutzerimonas stutzeri (strain A1501) (Pseudomonas stutzeri).